Here is a 142-residue protein sequence, read N- to C-terminus: MEQYLQAFEFVEEMVVLPKYLSWELYHHLAVLLREKYPKTYKNKGYIFNIKVKSILDNRITPTGQIVLVVMFQSDLYVPQVGHVFTERIRVNSVDDRYQWITIEPLTVFLRSNIPYKPNTLVTVQICSIKMDNTLCFGTILD.

This is an uncharacterized protein from Invertebrate iridescent virus 3 (IIV-3).